Reading from the N-terminus, the 135-residue chain is Lysozyme 2 (135 aa).

The first 18 residues, methionine 1–serine 18, serve as a signal peptide directing secretion. One can recognise an I-type lysozyme domain in the interval serine 19 to serine 135. 6 disulfides stabilise this stretch: cysteine 24-cysteine 100, cysteine 29-cysteine 35, cysteine 40-cysteine 49, cysteine 62-cysteine 82, cysteine 72-cysteine 78, and cysteine 96-cysteine 114. Residue glutamate 32 is the Proton donor of the active site. The active-site Nucleophile is aspartate 43. Lysine 55 to aspartate 61 is a substrate binding site. Residues tyrosine 86 and histidine 107 to glycine 109 each bind substrate.

Expressed in the epithelia of the basophil cells in the digestive tubules, but not in the epithelial cells lining the digestive ducts and stomach. Expressed at a much lower level in the style sac-midgut tissues. No expression detected in mantle, gills, labial palps or hemocytes.

The protein localises to the secreted. It carries out the reaction Hydrolysis of (1-&gt;4)-beta-linkages between N-acetylmuramic acid and N-acetyl-D-glucosamine residues in a peptidoglycan and between N-acetyl-D-glucosamine residues in chitodextrins.. Its activity is regulated as follows. Activity decreased by 80% by addition of 0.01 M calcium, zinc or magnesium. Activity only decreased by 17% by addition of ammonium, and by 2% by addition of sodium. In terms of biological role, the main role of this lysozyme is in digestion. Has antibacterial activity against the Gram-positive bacterium P.cerevisiae and the Gram-negative bacteria E.coli and V.vulnificus. Shows some chitinase activity but no isopeptidase activity. The chain is Lysozyme 2 from Crassostrea virginica (Eastern oyster).